The primary structure comprises 458 residues: Argininosuccinate lyase (458 aa).

Belongs to the lyase 1 family. Argininosuccinate lyase subfamily.

The protein localises to the cytoplasm. It catalyses the reaction 2-(N(omega)-L-arginino)succinate = fumarate + L-arginine. The protein operates within amino-acid biosynthesis; L-arginine biosynthesis; L-arginine from L-ornithine and carbamoyl phosphate: step 3/3. This chain is Argininosuccinate lyase, found in Salmonella typhimurium (strain LT2 / SGSC1412 / ATCC 700720).